Here is a 528-residue protein sequence, read N- to C-terminus: Probable rhamnogalacturonate lyase A (528 aa).

The signal sequence occupies residues 1–20; the sequence is MLSKATLLLFLPSWARVTYA. Asparagine 46 carries N-linked (GlcNAc...) asparagine glycosylation. Cysteine 50 and cysteine 93 are joined by a disulfide. A glycan (N-linked (GlcNAc...) asparagine) is linked at asparagine 148. Cysteine 184 and cysteine 193 are oxidised to a cystine. Asparagine 351 carries N-linked (GlcNAc...) asparagine glycosylation.

It belongs to the polysaccharide lyase 4 family.

It is found in the secreted. It carries out the reaction Endotype eliminative cleavage of L-alpha-rhamnopyranosyl-(1-&gt;4)-alpha-D-galactopyranosyluronic acid bonds of rhamnogalacturonan I domains in ramified hairy regions of pectin leaving L-rhamnopyranose at the reducing end and 4-deoxy-4,5-unsaturated D-galactopyranosyluronic acid at the non-reducing end.. Functionally, pectinolytic enzymes consist of four classes of enzymes: pectin lyase, polygalacturonase, pectin methylesterase and rhamnogalacturonase. Degrades the rhamnogalacturonan I (RG-I) backbone of pectin. The chain is Probable rhamnogalacturonate lyase A (rglA) from Aspergillus fumigatus (strain CBS 144.89 / FGSC A1163 / CEA10) (Neosartorya fumigata).